The following is a 292-amino-acid chain: Small ribosomal subunit protein uS9m (292 aa).

The interval 273 to 292 is disordered; it reads VERKKPGKRKARKMPTWVKR.

It belongs to the universal ribosomal protein uS9 family.

The protein localises to the mitochondrion. This Kluyveromyces marxianus (Yeast) protein is Small ribosomal subunit protein uS9m (MRPS9).